The following is a 167-amino-acid chain: MLPMITGFMNYGQQTLRAARYIGQGFMITLSHTNRLPVTIQYPYEKVITSERFRGRIHFEFDKCIACEVCVRVCPIDLPVVDWKLETNIRKKRLLNYSIDFGICIFCGNCVEYCPTNCLSMTEEYEFSTYDRHELNYNQIALGRLPMSVIDDYTIRTILNSPQTKNG.

2 consecutive 4Fe-4S ferredoxin-type domains span residues 55 to 84 (GRIHFEFDKCIACEVCVRVCPIDLPVVDWK) and 95 to 124 (LNYSIDFGICIFCGNCVEYCPTNCLSMTEE). 8 residues coordinate [4Fe-4S] cluster: Cys-64, Cys-67, Cys-70, Cys-74, Cys-104, Cys-107, Cys-110, and Cys-114.

Belongs to the complex I 23 kDa subunit family. As to quaternary structure, NDH is composed of at least 16 different subunits, 5 of which are encoded in the nucleus. It depends on [4Fe-4S] cluster as a cofactor.

Its subcellular location is the plastid. It localises to the chloroplast thylakoid membrane. The catalysed reaction is a plastoquinone + NADH + (n+1) H(+)(in) = a plastoquinol + NAD(+) + n H(+)(out). It carries out the reaction a plastoquinone + NADPH + (n+1) H(+)(in) = a plastoquinol + NADP(+) + n H(+)(out). NDH shuttles electrons from NAD(P)H:plastoquinone, via FMN and iron-sulfur (Fe-S) centers, to quinones in the photosynthetic chain and possibly in a chloroplast respiratory chain. The immediate electron acceptor for the enzyme in this species is believed to be plastoquinone. Couples the redox reaction to proton translocation, and thus conserves the redox energy in a proton gradient. The polypeptide is NAD(P)H-quinone oxidoreductase subunit I, chloroplastic (Lobularia maritima (Sweet alyssum)).